We begin with the raw amino-acid sequence, 307 residues long: Probable GTP 3',8-cyclase (307 aa).

The region spanning 4–222 (ALGREVRSVR…RTFHSREVYR (219 aa)) is the Radical SAM core domain. Arg-13 contacts GTP. [4Fe-4S] cluster contacts are provided by Cys-20 and Cys-24. Tyr-26 is a binding site for S-adenosyl-L-methionine. Cys-27 is a binding site for [4Fe-4S] cluster. Residue Lys-60 coordinates GTP. S-adenosyl-L-methionine-binding residues include Gly-64 and Ser-112. Lys-150 contacts GTP. Residues Cys-240 and Cys-243 each coordinate [4Fe-4S] cluster. GTP is bound at residue 245-247 (RIR). Cys-257 is a [4Fe-4S] cluster binding site.

This sequence belongs to the radical SAM superfamily. MoaA family. The cofactor is [4Fe-4S] cluster.

The enzyme catalyses GTP + AH2 + S-adenosyl-L-methionine = (8S)-3',8-cyclo-7,8-dihydroguanosine 5'-triphosphate + 5'-deoxyadenosine + L-methionine + A + H(+). It participates in cofactor biosynthesis; molybdopterin biosynthesis. Functionally, catalyzes the cyclization of GTP to (8S)-3',8-cyclo-7,8-dihydroguanosine 5'-triphosphate. The protein is Probable GTP 3',8-cyclase of Methanopyrus kandleri (strain AV19 / DSM 6324 / JCM 9639 / NBRC 100938).